The primary structure comprises 247 residues: Adenosylcobinamide-GDP ribazoletransferase (247 aa).

Helical transmembrane passes span 34–54, 59–79, 113–133, 138–158, 171–193, and 194–214; these read IVTFPLIGMLLGAIGGLVFVA, CGIPLAALFCVLTLALLTGGF, GGLALIFVLLAKVLVISELAL, MLAALAMACAAGRGVAVLLMY, VFIGKVTGRQTCVTLGLTAILAA, and ILMPGMHGVAALVVTLAAIFI.

It belongs to the CobS family. Requires Mg(2+) as cofactor.

The protein localises to the cell inner membrane. The enzyme catalyses alpha-ribazole + adenosylcob(III)inamide-GDP = adenosylcob(III)alamin + GMP + H(+). It carries out the reaction alpha-ribazole 5'-phosphate + adenosylcob(III)inamide-GDP = adenosylcob(III)alamin 5'-phosphate + GMP + H(+). It functions in the pathway cofactor biosynthesis; adenosylcobalamin biosynthesis; adenosylcobalamin from cob(II)yrinate a,c-diamide: step 7/7. Its function is as follows. Joins adenosylcobinamide-GDP and alpha-ribazole to generate adenosylcobalamin (Ado-cobalamin). Also synthesizes adenosylcobalamin 5'-phosphate from adenosylcobinamide-GDP and alpha-ribazole 5'-phosphate. The sequence is that of Adenosylcobinamide-GDP ribazoletransferase from Citrobacter koseri (strain ATCC BAA-895 / CDC 4225-83 / SGSC4696).